Consider the following 130-residue polypeptide: Histone H2B.2 (130 aa).

The span at 1–19 (MAPKAEKKPASKAPAEKKP) shows a compositional bias: basic and acidic residues. Positions 1 to 38 (MAPKAEKKPASKAPAEKKPAAKKTASTDGAKKRTKARK) are disordered. K7 and K8 each carry N6-acetyllysine; alternate. Glycyl lysine isopeptide (Lys-Gly) (interchain with G-Cter in SUMO); alternate cross-links involve residues K7 and K8. S11 bears the Phosphoserine mark. Residue K12 is modified to N6-acetyllysine. K17 is modified (N6-acetyllysine; alternate). Residue K17 forms a Glycyl lysine isopeptide (Lys-Gly) (interchain with G-Cter in SUMO); alternate linkage. K18 participates in a covalent cross-link: Glycyl lysine isopeptide (Lys-Gly) (interchain with G-Cter in SUMO). K124 is covalently cross-linked (Glycyl lysine isopeptide (Lys-Gly) (interchain with G-Cter in ubiquitin)).

Belongs to the histone H2B family. In terms of assembly, the nucleosome is a histone octamer containing two molecules each of H2A, H2B, H3 and H4 assembled in one H3-H4 heterotetramer and two H2A-H2B heterodimers. The octamer wraps approximately 147 bp of DNA. In terms of processing, monoubiquitinated by the UBC2-BRE1 complex to form H2BK123ub1. H2BK123ub1 gives a specific tag for epigenetic transcriptional activation and is also prerequisite for H3K4me and H3K79me formation. H2BK123ub1 also modulates the formation of double-strand breaks during meiosis and is a prerequisite for DNA-damage checkpoint activation. Phosphorylated by STE20 to form H2BS10ph during progression through meiotic prophase. May be correlated with chromosome condensation. Post-translationally, acetylated by GCN5 to form H2BK11ac and H2BK16ac. H2BK16ac can also be formed by ESA1. Acetylation of N-terminal lysines and particularly formation of H2BK11acK16ac has a positive effect on transcription. In terms of processing, sumoylation to form H2BK6su or H2BK7su, and probably also H2BK16su or H2BK17su, occurs preferentially near the telomeres and represses gene transcription.

Its subcellular location is the nucleus. It is found in the chromosome. Functionally, core component of nucleosome. Nucleosomes wrap and compact DNA into chromatin, limiting DNA accessibility to the cellular machineries which require DNA as a template. Histones thereby play a central role in transcription regulation, DNA repair, DNA replication and chromosomal stability. DNA accessibility is regulated via a complex set of post-translational modifications of histones, also called histone code, and nucleosome remodeling. This chain is Histone H2B.2 (HTB2), found in Candida albicans (strain SC5314 / ATCC MYA-2876) (Yeast).